The sequence spans 263 residues: Tryptophan synthase alpha chain (263 aa).

Active-site proton acceptor residues include glutamate 49 and aspartate 60.

This sequence belongs to the TrpA family. In terms of assembly, tetramer of two alpha and two beta chains.

The enzyme catalyses (1S,2R)-1-C-(indol-3-yl)glycerol 3-phosphate + L-serine = D-glyceraldehyde 3-phosphate + L-tryptophan + H2O. Its pathway is amino-acid biosynthesis; L-tryptophan biosynthesis; L-tryptophan from chorismate: step 5/5. Its function is as follows. The alpha subunit is responsible for the aldol cleavage of indoleglycerol phosphate to indole and glyceraldehyde 3-phosphate. This chain is Tryptophan synthase alpha chain, found in Cereibacter sphaeroides (strain KD131 / KCTC 12085) (Rhodobacter sphaeroides).